Consider the following 350-residue polypeptide: tRNA uridine(34) hydroxylase (350 aa).

In terms of domain architecture, Rhodanese spans 146–240; that stretch reads DDPDAVFIDM…YARRAREQGL (95 aa). The active-site Cysteine persulfide intermediate is Cys-200. Residues 319–328 show a composition bias toward basic and acidic residues; the sequence is RRRRAGRENG. A disordered region spans residues 319 to 350; it reads RRRRAGRENGNKIFNKSRGRLNSKLSIPDPAE.

It belongs to the TrhO family.

The enzyme catalyses uridine(34) in tRNA + AH2 + O2 = 5-hydroxyuridine(34) in tRNA + A + H2O. Its function is as follows. Catalyzes oxygen-dependent 5-hydroxyuridine (ho5U) modification at position 34 in tRNAs. The polypeptide is tRNA uridine(34) hydroxylase (Salmonella typhi).